The chain runs to 617 residues: Membrane protein insertase YidC (617 aa).

Residues 8-28 (MFVAIGLSLLVLLGWQYFVAG) traverse the membrane as a helical segment. Residues 36 to 49 (QIEAQNKAAQQQPP) are compositionally biased toward polar residues. Residues 36–91 (QIEAQNKAAQQQPPGVTPDGVPSPSPKEGGPAAPAPGTLPTAQGGPVSREAALARS) form a disordered region. The segment covering 61–81 (PKEGGPAAPAPGTLPTAQGGP) has biased composition (low complexity). 4 helical membrane passes run 387–407 (LFGN…LLFL), 461–481 (WPVL…FITI), 517–533 (FVHL…TMFV), and 549–569 (IFTF…AGLV).

This sequence belongs to the OXA1/ALB3/YidC family. Type 1 subfamily. As to quaternary structure, interacts with the Sec translocase complex via SecD. Specifically interacts with transmembrane segments of nascent integral membrane proteins during membrane integration.

Its subcellular location is the cell inner membrane. In terms of biological role, required for the insertion and/or proper folding and/or complex formation of integral membrane proteins into the membrane. Involved in integration of membrane proteins that insert both dependently and independently of the Sec translocase complex, as well as at least some lipoproteins. Aids folding of multispanning membrane proteins. The polypeptide is Membrane protein insertase YidC (Methylobacterium radiotolerans (strain ATCC 27329 / DSM 1819 / JCM 2831 / NBRC 15690 / NCIMB 10815 / 0-1)).